A 94-amino-acid chain; its full sequence is Protein RESPONSE TO LOW SULFUR 2 (94 aa).

Residues Val-15–Glu-63 are a coiled coil.

Functionally, may be involved in defense responses monitoring. Probably implicated into osmotic stress signaling. The chain is Protein RESPONSE TO LOW SULFUR 2 from Arabidopsis thaliana (Mouse-ear cress).